A 395-amino-acid polypeptide reads, in one-letter code: 8-amino-3,8-dideoxy-alpha-D-manno-octulosonate transaminase (395 aa).

Position 186 is an N6-(pyridoxal phosphate)lysine (Lys186).

This sequence belongs to the DegT/DnrJ/EryC1 family. Pyridoxal 5'-phosphate serves as cofactor.

It carries out the reaction 8-amino-3,8-dideoxy-alpha-D-manno-octulosonate + 2-oxoglutarate = 3,8-dideoxy-8-oxo-alpha-D-manno-octulosonate + L-glutamate. Its pathway is bacterial outer membrane biogenesis; lipopolysaccharide biosynthesis. Catalyzes the second (last) step of the biosynthesis of Kdo8N (8-amino-3,8-dideoxy-D-manno-octulosonate) from Kdo (3-deoxy-D-manno-octulosonate). The protein is 8-amino-3,8-dideoxy-alpha-D-manno-octulosonate transaminase of Shewanella oneidensis (strain ATCC 700550 / JCM 31522 / CIP 106686 / LMG 19005 / NCIMB 14063 / MR-1).